We begin with the raw amino-acid sequence, 218 residues long: Very-long-chain (3R)-3-hydroxyacyl-CoA dehydratase hpo-8 (218 aa).

The next 5 helical transmembrane spans lie at 15–35 (ILGW…GLTW), 44–64 (FELK…IVGL), 86–106 (ILHL…LVAW), 137–157 (LFYV…FASL), and 176–196 (MGIS…PGFP). Residues tyrosine 142 and glutamate 149 contribute to the active site.

This sequence belongs to the very long-chain fatty acids dehydratase HACD family.

The protein resides in the membrane. It carries out the reaction a very-long-chain (3R)-3-hydroxyacyl-CoA = a very-long-chain (2E)-enoyl-CoA + H2O. Its pathway is lipid metabolism; fatty acid biosynthesis. Its function is as follows. Catalyzes the third of the four reactions of the long-chain fatty acids elongation cycle. This endoplasmic reticulum-bound enzymatic process, allows the addition of two carbons to the chain of long- and very long-chain fatty acids/VLCFAs per cycle. This enzyme catalyzes the dehydration of the 3-hydroxyacyl-CoA intermediate into trans-2,3-enoyl-CoA, within each cycle of fatty acid elongation. Thereby, it participates in the production of VLCFAs of different chain lengths that are involved in multiple biological processes as precursors of membrane lipids and lipid mediators. The protein is Very-long-chain (3R)-3-hydroxyacyl-CoA dehydratase hpo-8 (hpo-8) of Caenorhabditis elegans.